The primary structure comprises 1328 residues: ABC transporter G family member 2 (1328 aa).

The region spanning 53 to 299 (VTARNLSMSI…FEGLGFKLPK (247 aa)) is the ABC transporter 1 domain. 91–98 (GSPGCGKT) serves as a coordination point for ATP. An ABC transmembrane type-2 1 domain is found at 388–665 (ISSQVAVRMR…FGMYFFLKNV (278 aa)). 7 helical membrane-spanning segments follow: residues 398–418 (IIKS…LDLN), 428–448 (LIFF…AILF), 477–497 (IPIA…MCGL), 504–524 (FIYF…FFKM), 534–554 (LASV…GFMA), 559–579 (IGGW…FEGL), and 642–662 (IDLL…YFFL). Residues 670-691 (RASDPKNDKRSKKASKRSKKIK) form a disordered region. The segment covering 678-689 (KRSKKASKRSKK) has biased composition (basic residues). Residues 721-960 (VYEVDVKKDG…DLLGYFENHG (240 aa)) form the ABC transporter 2 domain. 755 to 762 (GPSGAGKS) is an ATP binding site. The ABC transmembrane type-2 2 domain occupies 1049–1286 (VRRVQNIRTR…PICPITNGNQ (238 aa)). 6 helical membrane-spanning segments follow: residues 1059–1076 (LMRS…FVRM), 1087–1107 (VSIL…SIPI), 1128–1148 (IYLF…AIIY), 1172–1192 (FISF…ATVL), 1197–1217 (IAHA…GFMI), and 1303–1323 (AVIF…LKFI).

The protein belongs to the ABC transporter superfamily. ABCG family. PDR (TC 3.A.1.205) subfamily.

Its subcellular location is the endosome membrane. Required for endocytosis and endosomal pH regulation. This Dictyostelium discoideum (Social amoeba) protein is ABC transporter G family member 2 (abcG2).